Consider the following 293-residue polypeptide: Ribosomal protein L11 methyltransferase (293 aa).

S-adenosyl-L-methionine contacts are provided by Thr-145, Gly-166, Asp-188, and Asn-230.

It belongs to the methyltransferase superfamily. PrmA family.

The protein localises to the cytoplasm. The catalysed reaction is L-lysyl-[protein] + 3 S-adenosyl-L-methionine = N(6),N(6),N(6)-trimethyl-L-lysyl-[protein] + 3 S-adenosyl-L-homocysteine + 3 H(+). Functionally, methylates ribosomal protein L11. The chain is Ribosomal protein L11 methyltransferase from Actinobacillus succinogenes (strain ATCC 55618 / DSM 22257 / CCUG 43843 / 130Z).